A 308-amino-acid chain; its full sequence is Oxygen-dependent coproporphyrinogen-III oxidase (308 aa).

Ser100 is a substrate binding site. Residues His104 and His114 each coordinate a divalent metal cation. His114 serves as the catalytic Proton donor. Residue 116 to 118 participates in substrate binding; the sequence is NFR. His153 and His183 together coordinate a divalent metal cation. The tract at residues 248 to 283 is important for dimerization; that stretch reads YVEFNLVFDRGTIFGLQSGGRTESILSSMPPMATWK. 266–268 lines the substrate pocket; sequence GGR.

Belongs to the aerobic coproporphyrinogen-III oxidase family. As to quaternary structure, homodimer. It depends on a divalent metal cation as a cofactor.

Its subcellular location is the cytoplasm. It catalyses the reaction coproporphyrinogen III + O2 + 2 H(+) = protoporphyrinogen IX + 2 CO2 + 2 H2O. It participates in porphyrin-containing compound metabolism; protoporphyrin-IX biosynthesis; protoporphyrinogen-IX from coproporphyrinogen-III (O2 route): step 1/1. Functionally, involved in the heme biosynthesis. Catalyzes the aerobic oxidative decarboxylation of propionate groups of rings A and B of coproporphyrinogen-III to yield the vinyl groups in protoporphyrinogen-IX. This Francisella tularensis subsp. holarctica (strain FTNF002-00 / FTA) protein is Oxygen-dependent coproporphyrinogen-III oxidase.